We begin with the raw amino-acid sequence, 66 residues long: Phylloseptin-Az3 (66 aa).

Residues 1 to 22 (MAFLKKSLFLVLFLGLVSLSIC) form the signal peptide. Residues 23-44 (EEEKRETEEEEYNQEDDDKSEE) constitute a propeptide that is removed on maturation. The residue at position 65 (Phe65) is a Phenylalanine amide.

As to expression, expressed by the skin glands.

It is found in the secreted. In terms of biological role, has antimicrobial activity. The polypeptide is Phylloseptin-Az3 (Pithecopus azureus (Orange-legged monkey tree frog)).